The chain runs to 430 residues: Tol-Pal system protein TolB (430 aa).

Residues 1–26 (MSLMTKLGLRTLVASCLIAVGGAANA) form the signal peptide.

The protein belongs to the TolB family. In terms of assembly, the Tol-Pal system is composed of five core proteins: the inner membrane proteins TolA, TolQ and TolR, the periplasmic protein TolB and the outer membrane protein Pal. They form a network linking the inner and outer membranes and the peptidoglycan layer.

It localises to the periplasm. In terms of biological role, part of the Tol-Pal system, which plays a role in outer membrane invagination during cell division and is important for maintaining outer membrane integrity. This chain is Tol-Pal system protein TolB, found in Paraburkholderia xenovorans (strain LB400).